We begin with the raw amino-acid sequence, 338 residues long: Holliday junction branch migration complex subunit RuvB (338 aa).

Positions 1–180 (MTRLVTPDIT…FGVISRLEFY (180 aa)) are large ATPase domain (RuvB-L). Residues Leu19, Arg20, Gly61, Lys64, Thr65, Thr66, 127–129 (EDY), Arg170, Tyr180, and Arg217 each bind ATP. Position 65 (Thr65) interacts with Mg(2+). The segment at 181-251 (TDDELTTIVT…VVDESLKLLE (71 aa)) is small ATPAse domain (RuvB-S). The segment at 254–338 (EKGFDHMDRT…PPSSSQGNLF (85 aa)) is head domain (RuvB-H). 3 residues coordinate DNA: Arg290, Arg309, and Arg314.

This sequence belongs to the RuvB family. Homohexamer. Forms an RuvA(8)-RuvB(12)-Holliday junction (HJ) complex. HJ DNA is sandwiched between 2 RuvA tetramers; dsDNA enters through RuvA and exits via RuvB. An RuvB hexamer assembles on each DNA strand where it exits the tetramer. Each RuvB hexamer is contacted by two RuvA subunits (via domain III) on 2 adjacent RuvB subunits; this complex drives branch migration. In the full resolvosome a probable DNA-RuvA(4)-RuvB(12)-RuvC(2) complex forms which resolves the HJ.

Its subcellular location is the cytoplasm. The enzyme catalyses ATP + H2O = ADP + phosphate + H(+). Functionally, the RuvA-RuvB-RuvC complex processes Holliday junction (HJ) DNA during genetic recombination and DNA repair, while the RuvA-RuvB complex plays an important role in the rescue of blocked DNA replication forks via replication fork reversal (RFR). RuvA specifically binds to HJ cruciform DNA, conferring on it an open structure. The RuvB hexamer acts as an ATP-dependent pump, pulling dsDNA into and through the RuvAB complex. RuvB forms 2 homohexamers on either side of HJ DNA bound by 1 or 2 RuvA tetramers; 4 subunits per hexamer contact DNA at a time. Coordinated motions by a converter formed by DNA-disengaged RuvB subunits stimulates ATP hydrolysis and nucleotide exchange. Immobilization of the converter enables RuvB to convert the ATP-contained energy into a lever motion, pulling 2 nucleotides of DNA out of the RuvA tetramer per ATP hydrolyzed, thus driving DNA branch migration. The RuvB motors rotate together with the DNA substrate, which together with the progressing nucleotide cycle form the mechanistic basis for DNA recombination by continuous HJ branch migration. Branch migration allows RuvC to scan DNA until it finds its consensus sequence, where it cleaves and resolves cruciform DNA. The sequence is that of Holliday junction branch migration complex subunit RuvB from Geobacter metallireducens (strain ATCC 53774 / DSM 7210 / GS-15).